We begin with the raw amino-acid sequence, 447 residues long: Signal recognition particle 54 kDa protein (447 aa).

GTP-binding positions include Gly-103–Thr-110, Asp-185–Arg-189, and Thr-245–Asp-248.

This sequence belongs to the GTP-binding SRP family. SRP54 subfamily. In terms of assembly, part of the signal recognition particle protein translocation system, which is composed of SRP and FtsY. Archaeal SRP consists of a 7S RNA molecule of 300 nucleotides and two protein subunits: SRP54 and SRP19.

The protein resides in the cytoplasm. It carries out the reaction GTP + H2O = GDP + phosphate + H(+). Involved in targeting and insertion of nascent membrane proteins into the cytoplasmic membrane. Binds to the hydrophobic signal sequence of the ribosome-nascent chain (RNC) as it emerges from the ribosomes. The SRP-RNC complex is then targeted to the cytoplasmic membrane where it interacts with the SRP receptor FtsY. The sequence is that of Signal recognition particle 54 kDa protein from Saccharolobus islandicus (strain L.S.2.15 / Lassen #1) (Sulfolobus islandicus).